Consider the following 120-residue polypeptide: Large ribosomal subunit protein uL18 (120 aa).

The protein belongs to the universal ribosomal protein uL18 family. Part of the 50S ribosomal subunit; part of the 5S rRNA/L5/L18/L25 subcomplex. Contacts the 5S and 23S rRNAs.

This is one of the proteins that bind and probably mediate the attachment of the 5S RNA into the large ribosomal subunit, where it forms part of the central protuberance. This is Large ribosomal subunit protein uL18 from Bartonella tribocorum (strain CIP 105476 / IBS 506).